A 272-amino-acid chain; its full sequence is Rhamnulose-1-phosphate aldolase (272 aa).

Glu-117 is an active-site residue. Zn(2+) is bound by residues His-141, His-143, and His-212.

The protein belongs to the aldolase class II family. RhaD subfamily. The cofactor is Zn(2+).

It localises to the cytoplasm. The enzyme catalyses L-rhamnulose 1-phosphate = (S)-lactaldehyde + dihydroxyacetone phosphate. It functions in the pathway carbohydrate degradation; L-rhamnose degradation; glycerone phosphate from L-rhamnose: step 3/3. Functionally, catalyzes the reversible cleavage of L-rhamnulose-1-phosphate to dihydroxyacetone phosphate (DHAP) and L-lactaldehyde. The sequence is that of Rhamnulose-1-phosphate aldolase from Mannheimia succiniciproducens (strain KCTC 0769BP / MBEL55E).